The sequence spans 187 residues: Protein GrpE (187 aa).

A compositionally biased stretch (basic and acidic residues) spans 1–11 (MTDSSNEHETE). The segment at 1-23 (MTDSSNEHETENPSVPNPDNEIQ) is disordered.

It belongs to the GrpE family. Homodimer.

It localises to the cytoplasm. Functionally, participates actively in the response to hyperosmotic and heat shock by preventing the aggregation of stress-denatured proteins, in association with DnaK and GrpE. It is the nucleotide exchange factor for DnaK and may function as a thermosensor. Unfolded proteins bind initially to DnaJ; upon interaction with the DnaJ-bound protein, DnaK hydrolyzes its bound ATP, resulting in the formation of a stable complex. GrpE releases ADP from DnaK; ATP binding to DnaK triggers the release of the substrate protein, thus completing the reaction cycle. Several rounds of ATP-dependent interactions between DnaJ, DnaK and GrpE are required for fully efficient folding. In Chlamydia felis (strain Fe/C-56) (Chlamydophila felis), this protein is Protein GrpE.